We begin with the raw amino-acid sequence, 294 residues long: 4-hydroxy-tetrahydrodipicolinate synthase (294 aa).

T45 lines the pyruvate pocket. The Proton donor/acceptor role is filled by Y133. The active-site Schiff-base intermediate with substrate is the K162. V204 contributes to the pyruvate binding site.

This sequence belongs to the DapA family. Homotetramer; dimer of dimers.

Its subcellular location is the cytoplasm. The catalysed reaction is L-aspartate 4-semialdehyde + pyruvate = (2S,4S)-4-hydroxy-2,3,4,5-tetrahydrodipicolinate + H2O + H(+). Its pathway is amino-acid biosynthesis; L-lysine biosynthesis via DAP pathway; (S)-tetrahydrodipicolinate from L-aspartate: step 3/4. Its function is as follows. Catalyzes the condensation of (S)-aspartate-beta-semialdehyde [(S)-ASA] and pyruvate to 4-hydroxy-tetrahydrodipicolinate (HTPA). The sequence is that of 4-hydroxy-tetrahydrodipicolinate synthase from Bartonella bacilliformis (strain ATCC 35685 / KC583 / Herrer 020/F12,63).